We begin with the raw amino-acid sequence, 460 residues long: Bifunctional protein GlmU (460 aa).

The segment at 1-229 (MKNYAIILAA…FDESLGVNDR (229 aa)) is pyrophosphorylase. Residues 8 to 11 (LAAG), K22, Q72, and 77 to 78 (GT) each bind UDP-N-acetyl-alpha-D-glucosamine. D102 provides a ligand contact to Mg(2+). UDP-N-acetyl-alpha-D-glucosamine is bound by residues G139, E154, N169, and N227. Position 227 (N227) interacts with Mg(2+). The interval 230-250 (LALAQAEVIMQERINKQHMLN) is linker. An N-acetyltransferase region spans residues 251-460 (GVTLQNPAAT…RLPHHPDQPQ (210 aa)). Residues R332 and K350 each contribute to the UDP-N-acetyl-alpha-D-glucosamine site. H362 functions as the Proton acceptor in the catalytic mechanism. UDP-N-acetyl-alpha-D-glucosamine-binding residues include Y365 and N376. Acetyl-CoA contacts are provided by residues A379, 385–386 (NY), S404, A422, and R439.

In the N-terminal section; belongs to the N-acetylglucosamine-1-phosphate uridyltransferase family. The protein in the C-terminal section; belongs to the transferase hexapeptide repeat family. In terms of assembly, homotrimer. Requires Mg(2+) as cofactor.

The protein resides in the cytoplasm. It carries out the reaction alpha-D-glucosamine 1-phosphate + acetyl-CoA = N-acetyl-alpha-D-glucosamine 1-phosphate + CoA + H(+). The enzyme catalyses N-acetyl-alpha-D-glucosamine 1-phosphate + UTP + H(+) = UDP-N-acetyl-alpha-D-glucosamine + diphosphate. The protein operates within nucleotide-sugar biosynthesis; UDP-N-acetyl-alpha-D-glucosamine biosynthesis; N-acetyl-alpha-D-glucosamine 1-phosphate from alpha-D-glucosamine 6-phosphate (route II): step 2/2. It participates in nucleotide-sugar biosynthesis; UDP-N-acetyl-alpha-D-glucosamine biosynthesis; UDP-N-acetyl-alpha-D-glucosamine from N-acetyl-alpha-D-glucosamine 1-phosphate: step 1/1. It functions in the pathway bacterial outer membrane biogenesis; LPS lipid A biosynthesis. Its function is as follows. Catalyzes the last two sequential reactions in the de novo biosynthetic pathway for UDP-N-acetylglucosamine (UDP-GlcNAc). The C-terminal domain catalyzes the transfer of acetyl group from acetyl coenzyme A to glucosamine-1-phosphate (GlcN-1-P) to produce N-acetylglucosamine-1-phosphate (GlcNAc-1-P), which is converted into UDP-GlcNAc by the transfer of uridine 5-monophosphate (from uridine 5-triphosphate), a reaction catalyzed by the N-terminal domain. The protein is Bifunctional protein GlmU of Streptococcus equi subsp. zooepidemicus (strain ATCC 35246 / C74-63).